We begin with the raw amino-acid sequence, 436 residues long: Exodeoxyribonuclease 7 large subunit (436 aa).

The segment at 412-436 (PGGVMNKNSNTTDSTDNTENGTGEA) is disordered. Over residues 417 to 436 (NKNSNTTDSTDNTENGTGEA) the composition is skewed to low complexity.

Belongs to the XseA family. As to quaternary structure, heterooligomer composed of large and small subunits.

It localises to the cytoplasm. The enzyme catalyses Exonucleolytic cleavage in either 5'- to 3'- or 3'- to 5'-direction to yield nucleoside 5'-phosphates.. Its function is as follows. Bidirectionally degrades single-stranded DNA into large acid-insoluble oligonucleotides, which are then degraded further into small acid-soluble oligonucleotides. This Corynebacterium jeikeium (strain K411) protein is Exodeoxyribonuclease 7 large subunit.